The sequence spans 314 residues: Secreted frizzled-related protein 1 (314 aa).

A signal peptide spans 1–31 (MGVGRSARGRGGAASGVLLALAAALLAAGSA). The 117-residue stretch at 53 to 169 (TKPPQCVDIP…FPEGDVCIAM (117 aa)) folds into the FZ domain. Intrachain disulfides connect cysteine 58–cysteine 121, cysteine 68–cysteine 114, cysteine 105–cysteine 140, cysteine 129–cysteine 166, and cysteine 133–cysteine 157. An N-linked (GlcNAc...) asparagine glycan is attached at asparagine 173. Disulfide bonds link cysteine 186-cysteine 256, cysteine 189-cysteine 258, and cysteine 203-cysteine 306. The NTR domain occupies 186-306 (CPPCDNELKS…FMKRMKNHEC (121 aa)).

The protein belongs to the secreted frizzled-related protein (sFRP) family. In terms of assembly, interacts with WNT8, WNT1, WNT2, WNT4 and FRZD6. Interacts with MYOC. Highly expressed in kidney and embryonic heart. Also highly expressed in the eye, where it is principally localized to the ciliary body and the lens epithelium. Weaker expression in heart, lung and brain. In the brain, is expressed exclusively in the choroid plexus.

It is found in the secreted. Its function is as follows. Soluble frizzled-related proteins (sFRPS) function as modulators of Wnt signaling through direct interaction with Wnts. They have a role in regulating cell growth and differentiation in specific cell types. SFRP1 decreases intracellular beta-catenin levels. Has antiproliferative effects on vascular cells, in vitro and in vivo, and can induce, in vivo, an angiogenic response. In vascular cell cycle, delays the G1 phase and entry into the S phase. In kidney development, inhibits tubule formation and bud growth in metanephroi. Inhibits WNT1/WNT4-mediated TCF-dependent transcription. In Mus musculus (Mouse), this protein is Secreted frizzled-related protein 1.